A 242-amino-acid chain; its full sequence is Protein fmp-52, mitochondrial (242 aa).

The N-terminal 87 residues, methionine 1–valine 87, are a transit peptide targeting the mitochondrion. The interval serine 33–asparagine 58 is disordered. A compositionally biased stretch (polar residues) spans glutamine 35–asparagine 58.

It belongs to the FMP52 family.

The protein resides in the mitochondrion outer membrane. The protein is Protein fmp-52, mitochondrial (fmp-52) of Neurospora crassa (strain ATCC 24698 / 74-OR23-1A / CBS 708.71 / DSM 1257 / FGSC 987).